A 394-amino-acid chain; its full sequence is S-adenosylmethionine synthase 1 (394 aa).

Residue E11 participates in Mg(2+) binding. H17 contributes to the ATP binding site. E45 contributes to the K(+) binding site. E58 and Q101 together coordinate L-methionine. ATP-binding positions include 169 to 171 (DGK), 237 to 240 (SGRF), D248, 254 to 255 (RK), A271, K275, and K279. Position 248 (D248) interacts with L-methionine. K279 is an L-methionine binding site.

This sequence belongs to the AdoMet synthase family. In terms of assembly, homotetramer. Mn(2+) serves as cofactor. Requires Mg(2+) as cofactor. Co(2+) is required as a cofactor. The cofactor is K(+).

Its subcellular location is the cytoplasm. The enzyme catalyses L-methionine + ATP + H2O = S-adenosyl-L-methionine + phosphate + diphosphate. Its pathway is amino-acid biosynthesis; S-adenosyl-L-methionine biosynthesis; S-adenosyl-L-methionine from L-methionine: step 1/1. Functionally, catalyzes the formation of S-adenosylmethionine from methionine and ATP. The reaction comprises two steps that are both catalyzed by the same enzyme: formation of S-adenosylmethionine (AdoMet) and triphosphate, and subsequent hydrolysis of the triphosphate. The sequence is that of S-adenosylmethionine synthase 1 (SAM1) from Hordeum vulgare (Barley).